Consider the following 453-residue polypeptide: Phosphoglucosamine mutase (453 aa).

Serine 105 serves as the catalytic Phosphoserine intermediate. Residues serine 105, aspartate 244, aspartate 246, and aspartate 248 each contribute to the Mg(2+) site. Serine 105 carries the post-translational modification Phosphoserine.

The protein belongs to the phosphohexose mutase family. Requires Mg(2+) as cofactor. In terms of processing, activated by phosphorylation.

It carries out the reaction alpha-D-glucosamine 1-phosphate = D-glucosamine 6-phosphate. Catalyzes the conversion of glucosamine-6-phosphate to glucosamine-1-phosphate. The polypeptide is Phosphoglucosamine mutase (Chromohalobacter salexigens (strain ATCC BAA-138 / DSM 3043 / CIP 106854 / NCIMB 13768 / 1H11)).